The primary structure comprises 338 residues: Aspartate-semialdehyde dehydrogenase (338 aa).

Residues 13–16 (TGNV) and 41–42 (NS) contribute to the NADP(+) site. Arg101 contacts phosphate. The active-site Acyl-thioester intermediate is the Cys132. Gln159 is a substrate binding site. NADP(+) contacts are provided by residues 162-163 (SG) and Pro187. Lys216 contributes to the phosphate binding site. Arg237 provides a ligand contact to substrate. His244 functions as the Proton acceptor in the catalytic mechanism. Asn317 lines the NADP(+) pocket.

Belongs to the aspartate-semialdehyde dehydrogenase family. Homodimer.

The enzyme catalyses L-aspartate 4-semialdehyde + phosphate + NADP(+) = 4-phospho-L-aspartate + NADPH + H(+). It participates in amino-acid biosynthesis; L-lysine biosynthesis via DAP pathway; (S)-tetrahydrodipicolinate from L-aspartate: step 2/4. The protein operates within amino-acid biosynthesis; L-methionine biosynthesis via de novo pathway; L-homoserine from L-aspartate: step 2/3. Its pathway is amino-acid biosynthesis; L-threonine biosynthesis; L-threonine from L-aspartate: step 2/5. Catalyzes the NADPH-dependent formation of L-aspartate-semialdehyde (L-ASA) by the reductive dephosphorylation of L-aspartyl-4-phosphate. This Rickettsia typhi (strain ATCC VR-144 / Wilmington) protein is Aspartate-semialdehyde dehydrogenase.